Here is a 71-residue protein sequence, read N- to C-terminus: MRKSFYTWLMAQRNPKSNEPVAILADLAFEDSTFPKHTDDFEEVSRYLEDHASFSFNLGQFDQIWEDYLAH.

This sequence belongs to the UPF0346 family.

This chain is UPF0346 protein str0441, found in Streptococcus thermophilus (strain CNRZ 1066).